Consider the following 246-residue polypeptide: 3-deoxy-manno-octulosonate cytidylyltransferase (246 aa).

Belongs to the KdsB family.

Its subcellular location is the cytoplasm. It carries out the reaction 3-deoxy-alpha-D-manno-oct-2-ulosonate + CTP = CMP-3-deoxy-beta-D-manno-octulosonate + diphosphate. It functions in the pathway nucleotide-sugar biosynthesis; CMP-3-deoxy-D-manno-octulosonate biosynthesis; CMP-3-deoxy-D-manno-octulosonate from 3-deoxy-D-manno-octulosonate and CTP: step 1/1. Its pathway is bacterial outer membrane biogenesis; lipopolysaccharide biosynthesis. Functionally, activates KDO (a required 8-carbon sugar) for incorporation into bacterial lipopolysaccharide in Gram-negative bacteria. The protein is 3-deoxy-manno-octulosonate cytidylyltransferase of Bradyrhizobium sp. (strain ORS 278).